A 419-amino-acid chain; its full sequence is Arginine biosynthesis bifunctional protein ArgJ (419 aa).

6 residues coordinate substrate: Thr-154, Lys-180, Thr-191, Glu-277, Asn-414, and Thr-419. Residue Thr-191 is the Nucleophile of the active site.

This sequence belongs to the ArgJ family. In terms of assembly, heterotetramer of two alpha and two beta chains.

The protein localises to the cytoplasm. The catalysed reaction is N(2)-acetyl-L-ornithine + L-glutamate = N-acetyl-L-glutamate + L-ornithine. It catalyses the reaction L-glutamate + acetyl-CoA = N-acetyl-L-glutamate + CoA + H(+). It participates in amino-acid biosynthesis; L-arginine biosynthesis; L-ornithine and N-acetyl-L-glutamate from L-glutamate and N(2)-acetyl-L-ornithine (cyclic): step 1/1. Its pathway is amino-acid biosynthesis; L-arginine biosynthesis; N(2)-acetyl-L-ornithine from L-glutamate: step 1/4. Catalyzes two activities which are involved in the cyclic version of arginine biosynthesis: the synthesis of N-acetylglutamate from glutamate and acetyl-CoA as the acetyl donor, and of ornithine by transacetylation between N(2)-acetylornithine and glutamate. The sequence is that of Arginine biosynthesis bifunctional protein ArgJ from Thermosynechococcus vestitus (strain NIES-2133 / IAM M-273 / BP-1).